We begin with the raw amino-acid sequence, 90 residues long: 10 kDa anti-sigma factor (90 aa).

Interacts with the host sigma factor RpoD, and thereby inhibits its interaction with the catalytic core of the host RNA polymerase.

In terms of biological role, transcriptional inhibitor. Inhibits sigma 70-directed transcription by weakening its interaction with the core of the host's RNA polymerase. This allows Gp55 to successfully compete for the core enzyme. Plays an important role during the prereplicative period of phage T4 development. The polypeptide is 10 kDa anti-sigma factor (asiA) (Enterobacteria phage T4 (Bacteriophage T4)).